We begin with the raw amino-acid sequence, 132 residues long: MYTILLVGIGGFIGATLRYVFGGWIQNSFVNFPVGTLTINTIGSFFLGLIMYFSEYQGLFSDQTRIFLTIGILGAFTTLSTFGYESFRLLDDSKLMLMSINVVSTVLFSMMAVYLGKTVALGVSSYLLGGMK.

4 consecutive transmembrane segments (helical) span residues 4 to 24 (ILLV…FGGW), 32 to 52 (FPVG…LIMY), 66 to 86 (IFLT…GYES), and 95 to 115 (LMLM…AVYL). Na(+)-binding residues include Gly74 and Thr77.

It belongs to the fluoride channel Fluc/FEX (TC 1.A.43) family.

The protein localises to the cell membrane. The enzyme catalyses fluoride(in) = fluoride(out). Na(+) is not transported, but it plays an essential structural role and its presence is essential for fluoride channel function. Fluoride-specific ion channel. Important for reducing fluoride concentration in the cell, thus reducing its toxicity. The polypeptide is Fluoride-specific ion channel FluC 3 (Methanosarcina barkeri (strain Fusaro / DSM 804)).